A 267-amino-acid chain; its full sequence is Tryptophan synthase alpha chain (267 aa).

Active-site proton acceptor residues include Glu-43 and Asp-54.

The protein belongs to the TrpA family. As to quaternary structure, tetramer of two alpha and two beta chains.

The enzyme catalyses (1S,2R)-1-C-(indol-3-yl)glycerol 3-phosphate + L-serine = D-glyceraldehyde 3-phosphate + L-tryptophan + H2O. It participates in amino-acid biosynthesis; L-tryptophan biosynthesis; L-tryptophan from chorismate: step 5/5. In terms of biological role, the alpha subunit is responsible for the aldol cleavage of indoleglycerol phosphate to indole and glyceraldehyde 3-phosphate. The polypeptide is Tryptophan synthase alpha chain (Bacillus subtilis (strain 168)).